Reading from the N-terminus, the 518-residue chain is Golgi-associated olfactory signaling regulator (518 aa).

The N-terminal stretch at 1-19 (MKSFSRILFLVFLLAGLRS) is a signal peptide. Over 20 to 409 (KAAPSAPLPL…GRPRGAAGGA (390 aa)) the chain is Extracellular. The tract at residues 38 to 377 (HPSETSPLKG…ATLRAPQRHS (340 aa)) is disordered. Basic and acidic residues predominate over residues 92–106 (DLRETPHPESPETPK). N-linked (GlcNAc...) asparagine glycosylation occurs at Asn-124. A compositionally biased stretch (pro residues) spans 138-153 (TPGPTEMPHPGSPETP). A glycan (N-linked (GlcNAc...) asparagine) is linked at Asn-156. Polar residues-rich tracts occupy residues 168–180 (TPNT…TPQE) and 187–207 (LNAT…NPTK). Residues Asn-188 and Asn-220 are each glycosylated (N-linked (GlcNAc...) asparagine). Composition is skewed to basic and acidic residues over residues 209 to 220 (PDPKSPEKHDLN) and 236 to 247 (DPSKTPHPESHV). 2 stretches are compositionally biased toward polar residues: residues 248–270 (THNP…QNAT) and 276–285 (SDPQISTSLY). Residue Asn-268 is glycosylated (N-linked (GlcNAc...) asparagine). Residues 410-430 (LCLFFAGTALLIGIFVLLWCL) form a helical membrane-spanning segment. Over 431-518 (YRRAARQRPF…SPATLPNNFV (88 aa)) the chain is Cytoplasmic. The disordered stretch occupies residues 477 to 518 (HIATKQPPPTPPLPPKLPPPPRGGRPQRLEALSPATLPNNFV). Over residues 482–499 (QPPPTPPLPPKLPPPPRG) the composition is skewed to pro residues.

Its subcellular location is the golgi apparatus membrane. Its function is as follows. Required for proper function of the olfactory system. May be involved in establishing the acuity of olfactory sensory signaling. This Homo sapiens (Human) protein is Golgi-associated olfactory signaling regulator (GFY).